Consider the following 509-residue polypeptide: ATP synthase subunit alpha (509 aa).

169–176 (GDRQTGKT) lines the ATP pocket.

Belongs to the ATPase alpha/beta chains family. As to quaternary structure, F-type ATPases have 2 components, CF(1) - the catalytic core - and CF(0) - the membrane proton channel. CF(1) has five subunits: alpha(3), beta(3), gamma(1), delta(1), epsilon(1). CF(0) has three main subunits: a(1), b(2) and c(9-12). The alpha and beta chains form an alternating ring which encloses part of the gamma chain. CF(1) is attached to CF(0) by a central stalk formed by the gamma and epsilon chains, while a peripheral stalk is formed by the delta and b chains.

The protein resides in the cell inner membrane. It catalyses the reaction ATP + H2O + 4 H(+)(in) = ADP + phosphate + 5 H(+)(out). Produces ATP from ADP in the presence of a proton gradient across the membrane. The alpha chain is a regulatory subunit. This is ATP synthase subunit alpha from Rhizobium etli (strain ATCC 51251 / DSM 11541 / JCM 21823 / NBRC 15573 / CFN 42).